Here is a 511-residue protein sequence, read N- to C-terminus: 2,3-bisphosphoglycerate-independent phosphoglycerate mutase (511 aa).

Residues Asp-14 and Ser-64 each contribute to the Mn(2+) site. Ser-64 acts as the Phosphoserine intermediate in catalysis. Substrate-binding positions include His-125, 155 to 156, Arg-187, Arg-193, 259 to 262, and Lys-333; these read RD and RADR. Mn(2+)-binding residues include Asp-400, His-404, Asp-441, His-442, and His-460.

It belongs to the BPG-independent phosphoglycerate mutase family. In terms of assembly, monomer. The cofactor is Mn(2+).

It catalyses the reaction (2R)-2-phosphoglycerate = (2R)-3-phosphoglycerate. The protein operates within carbohydrate degradation; glycolysis; pyruvate from D-glyceraldehyde 3-phosphate: step 3/5. In terms of biological role, catalyzes the interconversion of 2-phosphoglycerate and 3-phosphoglycerate. This chain is 2,3-bisphosphoglycerate-independent phosphoglycerate mutase, found in Pseudomonas putida (strain ATCC 47054 / DSM 6125 / CFBP 8728 / NCIMB 11950 / KT2440).